We begin with the raw amino-acid sequence, 367 residues long: C-C chemokine receptor type 9 (367 aa).

Residues 1–46 are Extracellular-facing; sequence MVPTEATSLILNPSDDYGYDGTPPMEYDTNLTDYFCEKSHVRQFAG. N30 carries N-linked (GlcNAc...) asparagine glycosylation. Cystine bridges form between C36/C287 and C117/C196. Residues 47–72 form a helical membrane-spanning segment; sequence HFLPPLYWLVFIVGAVGNSLVILVYW. Over 73–83 the chain is Cytoplasmic; sequence YCTRVKTMTDM. The helical transmembrane segment at 84–107 threads the bilayer; sequence FLLNLAIADLLFLTTLPFWAIAAA. At 108 to 118 the chain is on the extracellular side; sequence DQWKFQTFMCK. The chain crosses the membrane as a helical span at residues 119-148; that stretch reads VVNSMYKMNFYSCVLLIMCISVDRYIAIAQ. Topologically, residues 149 to 157 are cytoplasmic; the sequence is AMRAQMWRQ. The chain crosses the membrane as a helical span at residues 158–183; sequence KRLLYSKMVCFTIWVMAAALCLPELL. Residues 184–206 are Extracellular-facing; the sequence is YSQVKEEHGTAICTVVYSSNEST. N203 carries an N-linked (GlcNAc...) asparagine glycan. The chain crosses the membrane as a helical span at residues 207 to 241; it reads KLKSAVLTLKVTLGFFLPFVVMACCYAIIIHTLIR. The Cytoplasmic segment spans residues 242–246; that stretch reads AKKSS. Residues 247-281 traverse the membrane as a helical segment; it reads KHKALKVTITVLTVFVLSQFPHNCVLLVQTIDAYA. Residues 282 to 288 are Extracellular-facing; sequence TFISSCA. Residues 289–319 form a helical membrane-spanning segment; the sequence is LSIKIDICFQVTQTVAFFHSCLNPVLYVFVG. The Cytoplasmic segment spans residues 320 to 367; the sequence is ERFRRDLVKTLKNLGCISQAQWVSFTRREGSLKLSSMLLETTSGALSF.

It belongs to the G-protein coupled receptor 1 family.

Its subcellular location is the cell membrane. Functionally, receptor for chemokine SCYA25/TECK. Subsequently transduces a signal by increasing the intracellular calcium ions level. The protein is C-C chemokine receptor type 9 (CCR9) of Ovis aries (Sheep).